Consider the following 148-residue polypeptide: 3-dehydroquinate dehydratase (148 aa).

Tyrosine 24 (proton acceptor) is an active-site residue. The substrate site is built by asparagine 80, histidine 86, and aspartate 93. Histidine 106 (proton donor) is an active-site residue. Residues isoleucine 107 to serine 108 and arginine 117 each bind substrate.

It belongs to the type-II 3-dehydroquinase family. As to quaternary structure, homododecamer.

The catalysed reaction is 3-dehydroquinate = 3-dehydroshikimate + H2O. Its pathway is metabolic intermediate biosynthesis; chorismate biosynthesis; chorismate from D-erythrose 4-phosphate and phosphoenolpyruvate: step 3/7. Its function is as follows. Catalyzes a trans-dehydration via an enolate intermediate. The sequence is that of 3-dehydroquinate dehydratase from Acidovorax sp. (strain JS42).